A 379-amino-acid polypeptide reads, in one-letter code: Lipoyl synthase 2, mitochondrial (379 aa).

7 residues coordinate [4Fe-4S] cluster: Cys106, Cys111, Cys117, Cys137, Cys141, Cys144, and Ser352. In terms of domain architecture, Radical SAM core spans 122–341 (EHGTQTATIM…EERGNELGFL (220 aa)).

The protein belongs to the radical SAM superfamily. Lipoyl synthase family. The cofactor is [4Fe-4S] cluster.

The protein localises to the mitochondrion. The enzyme catalyses [[Fe-S] cluster scaffold protein carrying a second [4Fe-4S](2+) cluster] + N(6)-octanoyl-L-lysyl-[protein] + 2 oxidized [2Fe-2S]-[ferredoxin] + 2 S-adenosyl-L-methionine + 4 H(+) = [[Fe-S] cluster scaffold protein] + N(6)-[(R)-dihydrolipoyl]-L-lysyl-[protein] + 4 Fe(3+) + 2 hydrogen sulfide + 2 5'-deoxyadenosine + 2 L-methionine + 2 reduced [2Fe-2S]-[ferredoxin]. It functions in the pathway protein modification; protein lipoylation via endogenous pathway; protein N(6)-(lipoyl)lysine from octanoyl-[acyl-carrier-protein]: step 2/2. Catalyzes the radical-mediated insertion of two sulfur atoms into the C-6 and C-8 positions of the octanoyl moiety bound to the lipoyl domains of lipoate-dependent enzymes, thereby converting the octanoylated domains into lipoylated derivatives. The polypeptide is Lipoyl synthase 2, mitochondrial (Drosophila yakuba (Fruit fly)).